Consider the following 447-residue polypeptide: DNA primase DnaG (447 aa).

In terms of domain architecture, Toprim spans 200 to 274 (DSIIVVEGRA…DIDYVARAPE (75 aa)). Mg(2+) contacts are provided by E206, D248, and D250.

This sequence belongs to the archaeal DnaG primase family. Forms a ternary complex with MCM helicase and DNA. Component of the archaeal exosome complex. Requires Mg(2+) as cofactor.

It carries out the reaction ssDNA + n NTP = ssDNA/pppN(pN)n-1 hybrid + (n-1) diphosphate.. Its function is as follows. RNA polymerase that catalyzes the synthesis of short RNA molecules used as primers for DNA polymerase during DNA replication. Also part of the exosome, which is a complex involved in RNA degradation. Acts as a poly(A)-binding protein that enhances the interaction between heteromeric, adenine-rich transcripts and the exosome. This is DNA primase DnaG from Pyrococcus horikoshii (strain ATCC 700860 / DSM 12428 / JCM 9974 / NBRC 100139 / OT-3).